The chain runs to 134 residues: Interleukin-5 (134 aa).

A signal peptide spans Met-1–Ala-19. N-linked (GlcNAc...) asparagine glycosylation is found at Asn-76 and Asn-90.

It belongs to the IL-5 family. In terms of assembly, homodimer; disulfide-linked. Interacts with IL5RA. Interacts with CSF2RB.

The protein resides in the secreted. Homodimeric cytokine expressed predominantly by T-lymphocytes and NK cells that plays an important role in the survival, differentiation, and chemotaxis of eosinophils. Also acts on activated and resting B-cells to induce immunoglobulin production, growth, and differentiation. Mechanistically, exerts its biological effects through a receptor composed of IL5RA subunit and the cytokine receptor common subunit beta/CSF2RB. Binding to the receptor leads to activation of various kinases including LYN, SYK and JAK2 and thereby propagates signals through the RAS-MAPK and JAK-STAT5 pathways respectively. This is Interleukin-5 (IL5) from Felis catus (Cat).